Consider the following 287-residue polypeptide: Chlorophyll a-b binding protein CP29.2, chloroplastic (287 aa).

The transit peptide at 1–31 directs the protein to the chloroplast; it reads MAATSTAAAASSIMGTRVVSDISSNSSRFTA. Position 32 is an N2-acetylarginine (Arg32). Phosphothreonine is present on Thr37. Trp55 is a chlorophyll b binding site. Phe75 contacts chlorophyll a. Phosphothreonine occurs at positions 109 and 111. Residues Glu137 and His140 each contribute to the chlorophyll a site. The helical transmembrane segment at 143–163 threads the bilayer; the sequence is WAMLATLGAITVEWLTGVTWQ. Leu177 contacts chlorophyll a. The helical transmembrane segment at 181–201 threads the bilayer; the sequence is LPFSISTLIWIEVLVIGYIEF. The chlorophyll b site is built by Glu200 and Arg203. The chlorophyll a site is built by Glu239, His242, Arg244, Gln256, and His271. Residues 245 to 265 form a helical membrane-spanning segment; the sequence is LAMVGFLGFAVQAAATGKGPL.

This sequence belongs to the light-harvesting chlorophyll a/b-binding (LHC) protein family. The LHC complex consists of chlorophyll a-b binding proteins. It depends on Binds at least 14 chlorophylls (8 Chl-a and 6 Chl-b) and carotenoids such as lutein and neoxanthin. as a cofactor. In terms of processing, photoregulated by reversible phosphorylation of its threonine residues.

Its subcellular location is the plastid. The protein localises to the chloroplast thylakoid membrane. Its function is as follows. The light-harvesting complex (LHC) functions as a light receptor, it captures and delivers excitation energy to photosystems with which it is closely associated. This chain is Chlorophyll a-b binding protein CP29.2, chloroplastic (LHCB4.2), found in Arabidopsis thaliana (Mouse-ear cress).